The sequence spans 313 residues: MTLPTTQNGPLRHFLQFKDLTASEIGYVLDRARIIKDKFKRYEPHMPLHDRTLAMVFEKASTRTRVSFEAGMYQMGGSVINLTSNDSQLGRSEPIEDTARVVSRMVDIVMIRTFEQTRIERFAAHSRVPVINGLTNEYHPCQILADIFTYIEHRGSIAGRIVAWVGDANNMSYTWLQAAEMLGFTLHVSTPAGYQLDPARIGNPPPSVLKQFKDPMQACQGAHLVTTDVWTSMGYEAENEERRKAFADWCVDAEMMAAADPNAVFMHCLPAHRGEEVTGEVIDGPQSVVWDEAENRMHAQKALMEFLLLGEIH.

Carbamoyl phosphate-binding positions include 61-64 (STRT), Gln88, Arg112, and 139-142 (HPCQ). L-ornithine contacts are provided by residues Asn170, Asp228, and 232–233 (SM). Carbamoyl phosphate contacts are provided by residues 268–269 (CL) and Arg296.

This sequence belongs to the aspartate/ornithine carbamoyltransferase superfamily. OTCase family.

The protein localises to the cytoplasm. It catalyses the reaction carbamoyl phosphate + L-ornithine = L-citrulline + phosphate + H(+). Its pathway is amino-acid biosynthesis; L-arginine biosynthesis; L-arginine from L-ornithine and carbamoyl phosphate: step 1/3. Functionally, reversibly catalyzes the transfer of the carbamoyl group from carbamoyl phosphate (CP) to the N(epsilon) atom of ornithine (ORN) to produce L-citrulline. This Bordetella avium (strain 197N) protein is Ornithine carbamoyltransferase.